Here is a 314-residue protein sequence, read N- to C-terminus: Nodulation protein D 1 (314 aa).

Positions 6–63 constitute an HTH lysR-type domain; sequence LDLNLLVALDALMTERNLTAAARSINLSQPAMSAAVGRLRTYFNDDLFTMVGRELVPT. Positions 23 to 42 form a DNA-binding region, H-T-H motif; that stretch reads LTAAARSINLSQPAMSAAVG.

This sequence belongs to the LysR transcriptional regulatory family.

Functionally, nodD regulates the expression of the nodABCFE genes which encode other nodulation proteins. NodD is also a negative regulator of its own expression. Binds flavonoids as inducers. The polypeptide is Nodulation protein D 1 (nodD1) (Rhizobium leguminosarum bv. phaseoli).